Here is a 250-residue protein sequence, read N- to C-terminus: 5'-nucleotidase SurE (250 aa).

A divalent metal cation-binding residues include aspartate 8, aspartate 9, serine 39, and asparagine 95.

This sequence belongs to the SurE nucleotidase family. Requires a divalent metal cation as cofactor.

It is found in the cytoplasm. It carries out the reaction a ribonucleoside 5'-phosphate + H2O = a ribonucleoside + phosphate. Nucleotidase that shows phosphatase activity on nucleoside 5'-monophosphates. This chain is 5'-nucleotidase SurE, found in Cupriavidus taiwanensis (strain DSM 17343 / BCRC 17206 / CCUG 44338 / CIP 107171 / LMG 19424 / R1) (Ralstonia taiwanensis (strain LMG 19424)).